Here is a 423-residue protein sequence, read N- to C-terminus: Dihydroorotase (423 aa).

2 residues coordinate Zn(2+): His56 and His58. Substrate-binding positions include 58-60 (HFR) and Asn89. Zn(2+) is bound by residues Lys137, His168, His227, and Asp302. Lys137 is modified (N6-carboxylysine). The active site involves Asp302. His306 contacts substrate.

The protein belongs to the metallo-dependent hydrolases superfamily. DHOase family. Class I DHOase subfamily. Requires Zn(2+) as cofactor.

It catalyses the reaction (S)-dihydroorotate + H2O = N-carbamoyl-L-aspartate + H(+). The protein operates within pyrimidine metabolism; UMP biosynthesis via de novo pathway; (S)-dihydroorotate from bicarbonate: step 3/3. Catalyzes the reversible cyclization of carbamoyl aspartate to dihydroorotate. The protein is Dihydroorotase of Methanocaldococcus jannaschii (strain ATCC 43067 / DSM 2661 / JAL-1 / JCM 10045 / NBRC 100440) (Methanococcus jannaschii).